The following is a 212-amino-acid chain: Negative modulator of initiation of replication (212 aa).

Interaction with DNA regions lie at residues 113 to 114 (AV) and 144 to 148 (RTRVY).

This sequence belongs to the SeqA family. In terms of assembly, homodimer. Polymerizes to form helical filaments.

It is found in the cytoplasm. In terms of biological role, negative regulator of replication initiation, which contributes to regulation of DNA replication and ensures that replication initiation occurs exactly once per chromosome per cell cycle. Binds to pairs of hemimethylated GATC sequences in the oriC region, thus preventing assembly of replication proteins and re-initiation at newly replicated origins. Repression is relieved when the region becomes fully methylated. This Actinobacillus succinogenes (strain ATCC 55618 / DSM 22257 / CCUG 43843 / 130Z) protein is Negative modulator of initiation of replication.